Reading from the N-terminus, the 389-residue chain is Formate-dependent phosphoribosylglycinamide formyltransferase (389 aa).

N(1)-(5-phospho-beta-D-ribosyl)glycinamide is bound by residues 12 to 13 (EL) and glutamate 72. Residues arginine 104, lysine 145, 150 to 155 (SSGKGQ), 185 to 188 (EAFV), and glutamate 193 contribute to the ATP site. The 192-residue stretch at 109-300 (DLASKELGLR…EFELHARAVL (192 aa)) folds into the ATP-grasp domain. The Mg(2+) site is built by glutamate 258 and glutamate 270. N(1)-(5-phospho-beta-D-ribosyl)glycinamide is bound by residues aspartate 277, lysine 348, and 355 to 356 (RR).

It belongs to the PurK/PurT family. As to quaternary structure, homodimer.

The enzyme catalyses N(1)-(5-phospho-beta-D-ribosyl)glycinamide + formate + ATP = N(2)-formyl-N(1)-(5-phospho-beta-D-ribosyl)glycinamide + ADP + phosphate + H(+). It functions in the pathway purine metabolism; IMP biosynthesis via de novo pathway; N(2)-formyl-N(1)-(5-phospho-D-ribosyl)glycinamide from N(1)-(5-phospho-D-ribosyl)glycinamide (formate route): step 1/1. Functionally, involved in the de novo purine biosynthesis. Catalyzes the transfer of formate to 5-phospho-ribosyl-glycinamide (GAR), producing 5-phospho-ribosyl-N-formylglycinamide (FGAR). Formate is provided by PurU via hydrolysis of 10-formyl-tetrahydrofolate. This chain is Formate-dependent phosphoribosylglycinamide formyltransferase, found in Chlorobium phaeobacteroides (strain DSM 266 / SMG 266 / 2430).